Reading from the N-terminus, the 146-residue chain is Acidic phospholipase A2 S5-32M (146 aa).

The N-terminal stretch at Met-1–Ala-19 is a signal peptide. The propeptide occupies Ala-20–Leu-27. 7 disulfide bridges follow: Cys-38–Cys-98, Cys-54–Cys-145, Cys-56–Cys-72, Cys-71–Cys-126, Cys-78–Cys-119, Cys-87–Cys-112, and Cys-105–Cys-117. Ca(2+)-binding residues include Tyr-55, Gly-57, and Gly-59. His-75 is an active-site residue. Asp-76 serves as a coordination point for Ca(2+). Asp-120 is a catalytic residue.

The protein belongs to the phospholipase A2 family. Group I subfamily. D49 sub-subfamily. The cofactor is Ca(2+). Expressed by the venom gland.

It localises to the secreted. It catalyses the reaction a 1,2-diacyl-sn-glycero-3-phosphocholine + H2O = a 1-acyl-sn-glycero-3-phosphocholine + a fatty acid + H(+). In terms of biological role, snake venom phospholipase A2 (PLA2) that inhibits collagen-induced platelet aggregation. PLA2 catalyzes the calcium-dependent hydrolysis of the 2-acyl groups in 3-sn-phosphoglycerides. This is Acidic phospholipase A2 S5-32M from Austrelaps superbus (Lowland copperhead snake).